The sequence spans 131 residues: UPF0382 inner membrane protein YgdD (131 aa).

At 1-4 (MTSR) the chain is on the periplasmic side. A helical membrane pass occupies residues 5 to 25 (FMLIFAAISGFIFVALGAFGA). The Cytoplasmic segment spans residues 26-64 (HVLSKTMGAVEMGWIQTGLEYQAFHTLAILGLAVAMQRR). A helical transmembrane segment spans residues 65-85 (ISIWFYWSSVFLALGTVLFSG). At 86-97 (SLYCLALSHLRL) the chain is on the periplasmic side. The chain crosses the membrane as a helical span at residues 98–118 (WAFVTPVGGVSFLAGWALMLV). Over 119-131 (GAIRLKRKGVSHE) the chain is Cytoplasmic.

This sequence belongs to the UPF0382 family.

It localises to the cell inner membrane. The polypeptide is UPF0382 inner membrane protein YgdD (ygdD) (Escherichia coli O157:H7).